A 433-amino-acid chain; its full sequence is Lipase 2 (433 aa).

Residues His165–Gly167 carry the Involved in the stabilization of the negatively charged intermediate by the formation of the oxyanion hole motif. The active-site Charge relay system is the Ser239. Active-site residues include Asp361 and His391.

The protein belongs to the 'GDXG' lipolytic enzyme family.

It carries out the reaction a triacylglycerol + H2O = a diacylglycerol + a fatty acid + H(+). In Moraxella sp. (strain TA144), this protein is Lipase 2 (lip2).